Here is a 167-residue protein sequence, read N- to C-terminus: Signal peptidase complex catalytic subunit SEC11 (167 aa).

At 1–12 the chain is on the cytoplasmic side; that stretch reads MNIRHQLVQFLN. A helical; Signal-anchor for type II membrane protein membrane pass occupies residues 13–30; sequence LALVLSSAFMAWKTLSVI. Residues 31–167 are Lumenal-facing; the sequence is TNSHSPIVVV…MGISSLLSNE (137 aa). Residues Ser-44, His-83, and Asp-109 each act as charge relay system in the active site. Residues 153–164 form a C-terminal short (CTS) helix region; the sequence is TLLGLMGISSLL.

This sequence belongs to the peptidase S26B family. As to quaternary structure, component of the signal peptidase complex (SPC) composed of a catalytic subunit SEC11 and three accessory subunits SPC1, SPC2 and SPC3. The complex induces a local thinning of the ER membrane which is used to measure the length of the signal peptide (SP) h-region of protein substrates. This ensures the selectivity of the complex towards h-regions shorter than 18-20 amino acids. SPC associates with the translocon complex.

It localises to the endoplasmic reticulum membrane. It carries out the reaction Cleavage of hydrophobic, N-terminal signal or leader sequences from secreted and periplasmic proteins.. Functionally, catalytic component of the signal peptidase complex (SPC) which catalyzes the cleavage of N-terminal signal sequences from nascent proteins as they are translocated into the lumen of the endoplasmic reticulum. Specifically cleaves N-terminal signal peptides that contain a hydrophobic alpha-helix (h-region) shorter than 18-20 amino acids. This chain is Signal peptidase complex catalytic subunit SEC11 (SEC11), found in Debaryomyces hansenii (strain ATCC 36239 / CBS 767 / BCRC 21394 / JCM 1990 / NBRC 0083 / IGC 2968) (Yeast).